The primary structure comprises 131 residues: Lymphocyte antigen 6C2 (131 aa).

Residues 1-26 form the signal peptide; sequence MDSTHATKSCLLILLVALLCAGRAQG. A UPAR/Ly6 domain is found at 27–116; the sequence is LQCYECYGVP…TAGSTWTMAG (90 aa). Intrachain disulfides connect Cys29-Cys53, Cys32-Cys41, Cys46-Cys74, Cys78-Cys95, and Cys96-Cys101. Gly109 is lipidated: GPI-anchor amidated glycine. A propeptide spans 110–131 (removed in mature form); that stretch reads STWTMAGVLLFSLSSVILQTLL.

It is found in the cell membrane. The protein is Lymphocyte antigen 6C2 (Ly6c2) of Mus musculus (Mouse).